The sequence spans 142 residues: Large ribosomal subunit protein uL13 (142 aa).

It belongs to the universal ribosomal protein uL13 family. As to quaternary structure, part of the 50S ribosomal subunit.

This protein is one of the early assembly proteins of the 50S ribosomal subunit, although it is not seen to bind rRNA by itself. It is important during the early stages of 50S assembly. In Thioalkalivibrio sulfidiphilus (strain HL-EbGR7), this protein is Large ribosomal subunit protein uL13.